We begin with the raw amino-acid sequence, 128 residues long: Large ribosomal subunit protein bL12 (128 aa).

It belongs to the bacterial ribosomal protein bL12 family. In terms of assembly, homodimer. Part of the ribosomal stalk of the 50S ribosomal subunit. Forms a multimeric L10(L12)X complex, where L10 forms an elongated spine to which 2 to 4 L12 dimers bind in a sequential fashion. Binds GTP-bound translation factors.

Functionally, forms part of the ribosomal stalk which helps the ribosome interact with GTP-bound translation factors. Is thus essential for accurate translation. The chain is Large ribosomal subunit protein bL12 from Halorhodospira halophila (strain DSM 244 / SL1) (Ectothiorhodospira halophila (strain DSM 244 / SL1)).